Consider the following 87-residue polypeptide: Cell division topological specificity factor (87 aa).

Belongs to the MinE family.

In terms of biological role, prevents the cell division inhibition by proteins MinC and MinD at internal division sites while permitting inhibition at polar sites. This ensures cell division at the proper site by restricting the formation of a division septum at the midpoint of the long axis of the cell. This Acidiphilium cryptum (strain JF-5) protein is Cell division topological specificity factor.